The sequence spans 95 residues: Small ribosomal subunit protein uS19 (95 aa).

Belongs to the universal ribosomal protein uS19 family.

In terms of biological role, protein S19 forms a complex with S13 that binds strongly to the 16S ribosomal RNA. In Coxiella burnetii (strain CbuK_Q154) (Coxiella burnetii (strain Q154)), this protein is Small ribosomal subunit protein uS19.